Reading from the N-terminus, the 333-residue chain is NADH-quinone oxidoreductase subunit H (333 aa).

8 consecutive transmembrane segments (helical) span residues 15–35 (FFIF…FVTY), 88–108 (FILA…VIPF), 117–137 (IGVG…GVVT), 159–179 (ISYE…AGSL), 191–211 (VWYI…AVAE), 239–259 (WAFF…LITV), 274–296 (IPGA…WFRV), and 313–333 (VLLP…ELFF).

It belongs to the complex I subunit 1 family. As to quaternary structure, NDH-1 is composed of 14 different subunits. Subunits NuoA, H, J, K, L, M, N constitute the membrane sector of the complex.

The protein localises to the cell membrane. It carries out the reaction a quinone + NADH + 5 H(+)(in) = a quinol + NAD(+) + 4 H(+)(out). NDH-1 shuttles electrons from NADH, via FMN and iron-sulfur (Fe-S) centers, to quinones in the respiratory chain. The immediate electron acceptor for the enzyme in this species is believed to be ubiquinone. Couples the redox reaction to proton translocation (for every two electrons transferred, four hydrogen ions are translocated across the cytoplasmic membrane), and thus conserves the redox energy in a proton gradient. This subunit may bind ubiquinone. The sequence is that of NADH-quinone oxidoreductase subunit H from Bacillus thuringiensis subsp. konkukian (strain 97-27).